We begin with the raw amino-acid sequence, 561 residues long: Putative transport protein YbjL (561 aa).

A run of 5 helical transmembrane segments spans residues 8–28 (LLNGNYILLLFVVLALGLCLG), 32–52 (LGSIQLGNSIGVLVVSLLLGQ), 66–86 (FMLFIFCVGVEAGPNFFSIFF), 94–114 (MLALVMVGSALVIALGLGKLF), and 158–178 (NLSLGYALTYLIGLVSLIVGA). RCK C-terminal domains follow at residues 200–288 (RGLD…SFRN) and 292–373 (VFDR…RIGF). Transmembrane regions (helical) follow at residues 383–403 (LLAFCAFFVIGLMIGMITFQF), 406–426 (FSFGMGNAAGLLFAGIMLGFM), 451–471 (VFMAGVGLSAGSGINNGLGAI), 475–495 (MLIAGLIVSLVPVVICFLFGA), and 540–560 (AIANVLLTLAGTIIVMVWPGL).

This sequence belongs to the AAE transporter (TC 2.A.81) family. YbjL subfamily.

The protein resides in the cell membrane. The protein is Putative transport protein YbjL of Escherichia coli O127:H6 (strain E2348/69 / EPEC).